Here is a 247-residue protein sequence, read N- to C-terminus: MGQKVHPIGIRLGVVKKHNANWYADPKQYSEYLLNDLQVRDYLRKKLDNAMISHIMIERPTGAAKITISTARPGIVIGKKGEDIEKLQKELTKMMGVPAQVNIEEITSPDLDARLVAEGIASQLERRVMFRRAMKRAVQNSMRSGAQGIKVELSGRLGGAEIARTEWYREGRVPLHTLRADIDYASVRAETTYGTIGVKVWVFRGEILDGMDSVYNPPKEDKTRAPKRRGRSNSNRRNSDRANTDRG.

The KH type-2 domain maps to 39–107 (VRDYLRKKLD…PAQVNIEEIT (69 aa)). The tract at residues 213–247 (SVYNPPKEDKTRAPKRRGRSNSNRRNSDRANTDRG) is disordered. Positions 237-247 (RNSDRANTDRG) are enriched in basic and acidic residues.

Belongs to the universal ribosomal protein uS3 family. Part of the 30S ribosomal subunit. Forms a tight complex with proteins S10 and S14.

In terms of biological role, binds the lower part of the 30S subunit head. Binds mRNA in the 70S ribosome, positioning it for translation. This Psychrobacter sp. (strain PRwf-1) protein is Small ribosomal subunit protein uS3.